A 208-amino-acid chain; its full sequence is Ras-related protein M-Ras (208 aa).

Residues Asp-21, Gly-22, Gly-23, Val-24, Gly-25, Lys-26, Ser-27, Ala-28, Phe-38, Val-39, Pro-40, Tyr-42, Pro-44, and Thr-45 each coordinate GTP. Position 27 (Ser-27) interacts with Mg(2+). Residues 42–50 carry the Effector region motif; it reads YDPTIEDSY. Positions 45 and 67 each coordinate Mg(2+). Residues Gly-70, Asn-126, Lys-127, Asp-129, Ser-156, Ala-157, and Lys-158 each contribute to the GTP site. At Cys-205 the chain carries Cysteine methyl ester. Residue Cys-205 is the site of S-geranylgeranyl cysteine attachment. The propeptide at 206–208 is removed in mature form; it reads VIL.

Belongs to the small GTPase superfamily. Ras family. Component of the SHOC2-MRAS-PP1c (SMP) holophosphatase complex consisting of SHOC2, GTP-bound M-Ras/MRAS and the catalytic subunit of protein phosphatase 1 (either PPP1CA, PPP1CB or PPP1CC). Interacts (active GTP-bound form) with both SHOC2 and PP1c (all isoforms) to form a tertiary complex; SHOC2 and PP1c preferably bind M-Ras/MRAS, but they also bind K-Ras/KRAS, N-Ras/NRAS and H-Ras/HRAS. Interacts with RGL3. Interacts (active GTP-bound form preferentially) with RGS14. The cofactor is Mg(2+). In terms of tissue distribution, expressed in skeletal muscle cells.

Its subcellular location is the cell membrane. It catalyses the reaction GTP + H2O = GDP + phosphate + H(+). Signal transducer in the Ras-MAPK signaling pathway that regulates cell proliferation and survival. Core component of the SHOC2-MRAS-PP1c (SMP) holophosphatase complex that regulates the MAPK pathway activation. The formation of the SMP complex only occurs when MRAS is GTP-bound. MRAS has low intrinsic GTPase activity and may require additional factors for activation. The SMP complex specifically dephosphorylates the inhibitory phosphorylation at 'Ser-259' of RAF1 kinase, 'Ser-365' of BRAF kinase and 'Ser-214' of ARAF kinase, stimulating their kinase activities. This is Ras-related protein M-Ras (Mras) from Rattus norvegicus (Rat).